Reading from the N-terminus, the 156-residue chain is Small ribosomal subunit protein uS7 (156 aa).

This sequence belongs to the universal ribosomal protein uS7 family. In terms of assembly, part of the 30S ribosomal subunit. Contacts proteins S9 and S11.

In terms of biological role, one of the primary rRNA binding proteins, it binds directly to 16S rRNA where it nucleates assembly of the head domain of the 30S subunit. Is located at the subunit interface close to the decoding center, probably blocks exit of the E-site tRNA. This Synechocystis sp. (strain ATCC 27184 / PCC 6803 / Kazusa) protein is Small ribosomal subunit protein uS7.